The chain runs to 621 residues: Glutathione-regulated potassium-efflux system protein KefC (621 aa).

13 consecutive transmembrane segments (helical) span residues 4 to 24 (HTLI…PIAV), 26 to 46 (LGLG…PWAL), 54 to 74 (AILH…GLEL), 90 to 110 (GALQ…LLGL), 114 to 134 (VAEL…MQAM), 149 to 169 (FAVL…IPLL), 178 to 198 (LMAF…VVVL), 218 to 237 (VFSA…LEEV), 238 to 257 (GLSM…SSEY), 270 to 290 (GLLL…GTLV), 294 to 314 (LRIV…LWLI), 326 to 346 (RWFA…FGAA), and 359 to 379 (ALTL…VLLT). Residues 399–518 (QPRVIVAGFG…AGVEAPERET (120 aa)) enclose the RCK N-terminal domain. The interval 598-621 (GWQGTEEGRHTGDIADEPENKPSA) is disordered.

Belongs to the monovalent cation:proton antiporter 2 (CPA2) transporter (TC 2.A.37) family. KefC subfamily. In terms of assembly, homodimer. Interacts with the regulatory subunit KefF.

The protein localises to the cell inner membrane. Functionally, pore-forming subunit of a potassium efflux system that confers protection against electrophiles. Catalyzes K(+)/H(+) antiport. In Klebsiella pneumoniae subsp. pneumoniae (strain ATCC 700721 / MGH 78578), this protein is Glutathione-regulated potassium-efflux system protein KefC.